A 74-amino-acid polypeptide reads, in one-letter code: Conotoxin MiK41 (74 aa).

Residues 1 to 22 (MKLTCVLIITVLFLTACQLTTA) form the signal peptide. A propeptide spanning residues 23–45 (VTYSRGEHKHRALMSTGTNYRLP) is cleaved from the precursor. Cystine bridges form between Cys-48-Cys-62, Cys-55-Cys-66, and Cys-61-Cys-73.

This sequence belongs to the conotoxin O1 superfamily. In terms of tissue distribution, expressed by the venom duct.

It localises to the secreted. The polypeptide is Conotoxin MiK41 (Conus miles (Soldier cone)).